The chain runs to 491 residues: Probable polygalacturonase (491 aa).

A helical membrane pass occupies residues 15-35 (PIVSFYCFQVVSVLVAVVLLL). Asn165, Asn175, and Asn214 each carry an N-linked (GlcNAc...) asparagine glycan. 4 PbH1 repeats span residues 230–256 (SRNI…NPDS), 257–278 (CTNT…AVKS), 319–340 (IQDV…RIKT), and 348–369 (VKDI…WMTG). The Proton donor role is filled by Asp271. N-linked (GlcNAc...) asparagine glycosylation is found at Asn399 and Asn421.

The protein belongs to the glycosyl hydrolase 28 family.

The protein resides in the membrane. It catalyses the reaction (1,4-alpha-D-galacturonosyl)n+m + H2O = (1,4-alpha-D-galacturonosyl)n + (1,4-alpha-D-galacturonosyl)m.. The sequence is that of Probable polygalacturonase from Vitis vinifera (Grape).